Here is a 461-residue protein sequence, read N- to C-terminus: Glutamyl-tRNA reductase (461 aa).

Substrate is bound by residues 50–53 (TCNR), Ser-111, 116–118 (EPQ), and Gln-122. The active-site Nucleophile is the Cys-51. 191–196 (GAGEMA) lines the NADP(+) pocket.

Belongs to the glutamyl-tRNA reductase family. As to quaternary structure, homodimer.

It catalyses the reaction (S)-4-amino-5-oxopentanoate + tRNA(Glu) + NADP(+) = L-glutamyl-tRNA(Glu) + NADPH + H(+). It participates in porphyrin-containing compound metabolism; protoporphyrin-IX biosynthesis; 5-aminolevulinate from L-glutamyl-tRNA(Glu): step 1/2. Functionally, catalyzes the NADPH-dependent reduction of glutamyl-tRNA(Glu) to glutamate 1-semialdehyde (GSA). This chain is Glutamyl-tRNA reductase, found in Syntrophobacter fumaroxidans (strain DSM 10017 / MPOB).